The chain runs to 247 residues: 3-deoxy-manno-octulosonate cytidylyltransferase (247 aa).

This sequence belongs to the KdsB family.

It is found in the cytoplasm. It carries out the reaction 3-deoxy-alpha-D-manno-oct-2-ulosonate + CTP = CMP-3-deoxy-beta-D-manno-octulosonate + diphosphate. The protein operates within nucleotide-sugar biosynthesis; CMP-3-deoxy-D-manno-octulosonate biosynthesis; CMP-3-deoxy-D-manno-octulosonate from 3-deoxy-D-manno-octulosonate and CTP: step 1/1. It participates in bacterial outer membrane biogenesis; lipopolysaccharide biosynthesis. Activates KDO (a required 8-carbon sugar) for incorporation into bacterial lipopolysaccharide in Gram-negative bacteria. In Pelodictyon phaeoclathratiforme (strain DSM 5477 / BU-1), this protein is 3-deoxy-manno-octulosonate cytidylyltransferase.